The chain runs to 171 residues: Disulfide bond formation protein B (171 aa).

The Cytoplasmic segment spans residues 1–8 (MQWSYRFV). The chain crosses the membrane as a helical span at residues 9 to 25 (SGLLVLASIVGMTFALY). Residues 26–43 (LEHFKGLEPCPLCIFQRV) are Periplasmic-facing. Cys35 and Cys38 are joined by a disulfide. The chain crosses the membrane as a helical span at residues 44-60 (GLMAMGIVALIAFLHNP). At 61 to 67 (VSNAFKR) the chain is on the cytoplasmic side. A helical transmembrane segment spans residues 68–85 (VYAFLATLGILWSVGVAI). At 86-142 (RHVWLQTLPPDQVPSCGPGLNYLLDALPLKTVLQQVLQGSGECAAIHWTFLGQSLPV) the chain is on the periplasmic side. Cys101 and Cys128 are disulfide-bonded. Residues 143-161 (WSLAYFSLILLVCVWQLLR) traverse the membrane as a helical segment. The Cytoplasmic segment spans residues 162-171 (RYPVIVTKKK).

This sequence belongs to the DsbB family.

The protein resides in the cell inner membrane. Functionally, required for disulfide bond formation in some periplasmic proteins. Acts by oxidizing the DsbA protein. The chain is Disulfide bond formation protein B from Acinetobacter baylyi (strain ATCC 33305 / BD413 / ADP1).